Consider the following 401-residue polypeptide: Argininosuccinate synthase (401 aa).

8–16 is an ATP binding site; sequence AYSGGLDTS. Position 85 (Tyr-85) interacts with L-citrulline. An ATP-binding site is contributed by Gly-115. L-aspartate is bound by residues Thr-117, Asn-121, and Asp-122. Asn-121 contacts L-citrulline. L-citrulline is bound by residues Arg-125, Ser-173, Glu-258, and Tyr-270.

It belongs to the argininosuccinate synthase family. Type 1 subfamily. As to quaternary structure, homotetramer.

Its subcellular location is the cytoplasm. It carries out the reaction L-citrulline + L-aspartate + ATP = 2-(N(omega)-L-arginino)succinate + AMP + diphosphate + H(+). The protein operates within amino-acid biosynthesis; L-arginine biosynthesis; L-arginine from L-ornithine and carbamoyl phosphate: step 2/3. This is Argininosuccinate synthase from Staphylococcus carnosus (strain TM300).